We begin with the raw amino-acid sequence, 185 residues long: Ribosome-recycling factor (185 aa).

The interval Ile-139 to Lys-159 is disordered. The span at Ser-141–Lys-159 shows a compositional bias: basic and acidic residues.

The protein belongs to the RRF family.

The protein resides in the cytoplasm. In terms of biological role, responsible for the release of ribosomes from messenger RNA at the termination of protein biosynthesis. May increase the efficiency of translation by recycling ribosomes from one round of translation to another. The protein is Ribosome-recycling factor of Sorangium cellulosum (strain So ce56) (Polyangium cellulosum (strain So ce56)).